The following is a 118-amino-acid chain: MIVIFCVIVKCEFFCIFTFIFGCFIIEADLWPAVFVACCTIIKMGRCNMCIFITAIIFKLKCIFKGRHGSMPIAMKSSRHNYQLTFLFKVNCVFISLPGGNKGFLLRLLSLAQPPVNF.

2 helical membrane passes run 7–27 (VIVK…FIIE) and 34–58 (VFVA…AIIF).

The protein localises to the membrane. This is an uncharacterized protein from Saccharomyces cerevisiae (strain ATCC 204508 / S288c) (Baker's yeast).